The sequence spans 1169 residues: Zinc finger protein 862 (1169 aa).

The KRAB 1 domain occupies 11–77 (VTFDDITVYL…SVQGQRSLLE (67 aa)). The TTF-type 1 zinc-finger motif lies at 135 to 218 (KPRSIQKSWF…RDPIWAARFR (84 aa)). Positions 333-404 (VVFEDVAVYF…DPNGPKWGKG (72 aa)) constitute a KRAB 2 domain. The TTF-type 2 zinc finger occupies 461-544 (RPRSIQRSWF…KEDTPHTALV (84 aa)).

Its subcellular location is the nucleus. In terms of biological role, may be involved in transcriptional regulation. The protein is Zinc finger protein 862 (ZNF862) of Homo sapiens (Human).